The following is a 480-amino-acid chain: Adenylosuccinate synthetase, chloroplastic (480 aa).

Residues 1–54 (MATARVMVADRARAFGGTTATRARRDDQGRRVTIARGIPSRARVVVARASERAY) constitute a chloroplast transit peptide. GTP is bound by residues 69 to 75 (GDEGKGK) and 97 to 99 (GHT). The active-site Proton acceptor is the Asp-70. Residues Asp-70 and Gly-97 each coordinate Mg(2+). Residues 70–73 (DEGK), 95–98 (NAGH), Thr-187, Arg-201, Asn-278, Thr-293, and Arg-357 contribute to the IMP site. The active-site Proton donor is His-98. 353 to 359 (TTTGRPR) contributes to the substrate binding site. Residues Arg-359, 385-387 (KLD), and 468-470 (GVG) contribute to the GTP site.

The protein belongs to the adenylosuccinate synthetase family. Homodimer. The cofactor is Mg(2+).

It is found in the plastid. It localises to the chloroplast. It carries out the reaction IMP + L-aspartate + GTP = N(6)-(1,2-dicarboxyethyl)-AMP + GDP + phosphate + 2 H(+). It participates in purine metabolism; AMP biosynthesis via de novo pathway; AMP from IMP: step 1/2. Plays an important role in the de novo pathway and in the salvage pathway of purine nucleotide biosynthesis. Catalyzes the first committed step in the biosynthesis of AMP from IMP. The sequence is that of Adenylosuccinate synthetase, chloroplastic from Ostreococcus tauri.